A 240-amino-acid chain; its full sequence is UDP-2,3-diacylglucosamine hydrolase (240 aa).

Positions 7, 9, 40, 78, and 113 each coordinate Mn(2+). A substrate-binding site is contributed by 78–79 (NR). Substrate-binding residues include Asp-121, Ser-159, Thr-163, Lys-166, and His-194. His-194 and His-196 together coordinate Mn(2+).

The protein belongs to the LpxH family. Requires Mn(2+) as cofactor.

It localises to the cell inner membrane. It catalyses the reaction UDP-2-N,3-O-bis[(3R)-3-hydroxytetradecanoyl]-alpha-D-glucosamine + H2O = 2-N,3-O-bis[(3R)-3-hydroxytetradecanoyl]-alpha-D-glucosaminyl 1-phosphate + UMP + 2 H(+). It functions in the pathway glycolipid biosynthesis; lipid IV(A) biosynthesis; lipid IV(A) from (3R)-3-hydroxytetradecanoyl-[acyl-carrier-protein] and UDP-N-acetyl-alpha-D-glucosamine: step 4/6. Functionally, hydrolyzes the pyrophosphate bond of UDP-2,3-diacylglucosamine to yield 2,3-diacylglucosamine 1-phosphate (lipid X) and UMP by catalyzing the attack of water at the alpha-P atom. Involved in the biosynthesis of lipid A, a phosphorylated glycolipid that anchors the lipopolysaccharide to the outer membrane of the cell. This chain is UDP-2,3-diacylglucosamine hydrolase, found in Pseudomonas entomophila (strain L48).